The sequence spans 500 residues: Kynurenine 3-monooxygenase acdD (500 aa).

FAD is bound by residues V17 and 36–38; that span reads ELR. N50 carries N-linked (GlcNAc...) asparagine glycosylation. Residue A58 participates in FAD binding. L-kynurenine is bound by residues R89 and Y106. 2 residues coordinate FAD: R118 and L143. N-linked (GlcNAc...) asparagine glycosylation is present at N163. FAD contacts are provided by residues D321 and 332–335; that span reads QGLN. Residues N392 and Y428 each contribute to the L-kynurenine site. A helical transmembrane segment spans residues 451–471; that stretch reads LLLYGSISAIISSAAIVGVLA.

Belongs to the aromatic-ring hydroxylase family. KMO subfamily. FAD serves as cofactor.

It localises to the mitochondrion outer membrane. It carries out the reaction L-kynurenine + NADPH + O2 + H(+) = 3-hydroxy-L-kynurenine + NADP(+) + H2O. Its pathway is secondary metabolite biosynthesis. It participates in cofactor biosynthesis; NAD(+) biosynthesis; quinolinate from L-kynurenine: step 1/3. In terms of biological role, indoleamine 2,3-dioxygenase; part of the gene cluster that mediates the biosynthesis of aspcandine, a pyrrolobenzazepine alkaloid. Initially, the indoleamine 2,3-dioxygenase acdA accepts L-tryptophan and performs the oxidative opening of the indole ring to yield N'-formyl-L-kynurenine, which undergoes the spontaneous deformylation reaction to provide L-kynurenine. The kynurenine 3-monooxygenase acdD then hydroxylates L-kynurenine to afford 3-hydroxy-L-kynurenine. 3-hydroxy-L-kynurenine is activated by the A domain of the NRPS-PKS acdB and subsequently loaded onto the enzyme. The KS domain conducts the decarboxylative condensation of the 3-hydroxy-L-kynurenyl and malonyl moieties, and subsequent nucleophilic attacks by the two amino groups would occur nonenzymatically at two distinct positions, achieving the chain release and the construction of the tricyclic system. Finally, the dehydration reaction completes the biosynthesis to yield aspcandine. The polypeptide is Kynurenine 3-monooxygenase acdD (Aspergillus candidus).